The chain runs to 106 residues: Glutaredoxin-1 (106 aa).

Ala-2 carries the N-acetylalanine modification. One can recognise a Glutaredoxin domain in the interval 3 to 106; the sequence is QEFVNCKIQP…TRLKQIGALQ (104 aa). Lys-9 carries the post-translational modification N6-succinyllysine. 2 cysteine pairs are disulfide-bonded: Cys-23–Cys-26 and Cys-79–Cys-83.

It belongs to the glutaredoxin family.

It is found in the cytoplasm. In terms of biological role, has a glutathione-disulfide oxidoreductase activity in the presence of NADPH and glutathione reductase. Reduces low molecular weight disulfides and proteins. The protein is Glutaredoxin-1 (GLRX) of Homo sapiens (Human).